We begin with the raw amino-acid sequence, 220 residues long: Flagellin A2 (220 aa).

The propeptide occupies 1–11 (MFNNITDDDRG). Residues asparagine 78, asparagine 95, asparagine 112, and asparagine 124 are each glycosylated (N-linked (GlcNAc...) asparagine).

The protein belongs to the archaeal flagellin family. Glycosylated by a pentasaccharide similar to the S-layer glycoprotein, probably comprising a hexose, 2 hexuronic acids, a methyl ester of a hexuronic acid and mannose.

The protein resides in the archaeal flagellum. Flagellin that plays both structural and regulatory roles in flagella biosynthesis. Does not constitute a major flagellin in terms of abundance contrary to FlgA1: may regulate the flagella-dependent swimming motility depending on the relative abundance of FlgA1. Not involved in PibD-dependent surface adhesion. The protein is Flagellin A2 (flgA2) of Haloferax volcanii (strain ATCC 29605 / DSM 3757 / JCM 8879 / NBRC 14742 / NCIMB 2012 / VKM B-1768 / DS2) (Halobacterium volcanii).